Here is a 171-residue protein sequence, read N- to C-terminus: Nudix hydrolase DR_0079 (171 aa).

The Nudix hydrolase domain maps to 32-162; it reads ERVRVVNAFL…EAAKGDLAEL (131 aa). Residues 69–91 carry the Nudix box motif; the sequence is GGAVQSGETYEEAFRREAREELN. Positions 85 and 89 each coordinate Mg(2+).

Belongs to the Nudix hydrolase family. Monomer. Requires Mg(2+) as cofactor.

Inhibited by zinc, calcium or copper ions. In terms of biological role, hydrolase that converts various nucleotide triphosphates (NTPs) to the corresponding nucleotide monophosphates and diphosphate, and nucleotide diphosphates to nucleotide monophosphates and inorganic phosphate. Has a marked preference for cytosine ribonucleoside 5'-diphosphate (CDP) and cytosine ribonucleoside 5'-triphosphate (CTP). Has lower activity towards the deoxyribose nucleotides dCDP and dCTP, and towards dGDP, TDP and UDP. The chain is Nudix hydrolase DR_0079 from Deinococcus radiodurans (strain ATCC 13939 / DSM 20539 / JCM 16871 / CCUG 27074 / LMG 4051 / NBRC 15346 / NCIMB 9279 / VKM B-1422 / R1).